Here is a 626-residue protein sequence, read N- to C-terminus: Phosphomethylpyrimidine synthase (626 aa).

Positions 1 to 22 (MTKQEKAINLSESAQVDQQSVQ) are disordered. A compositionally biased stretch (polar residues) spans 10 to 22 (LSESAQVDQQSVQ). Residues Asn-232, Met-261, Tyr-290, His-326, 346–348 (SRG), 387–390 (DGLR), and Glu-426 each bind substrate. His-430 provides a ligand contact to Zn(2+). A substrate-binding site is contributed by Tyr-453. His-494 serves as a coordination point for Zn(2+). Residues Cys-574, Cys-577, and Cys-582 each contribute to the [4Fe-4S] cluster site.

It belongs to the ThiC family. In terms of assembly, homodimer. It depends on [4Fe-4S] cluster as a cofactor.

The catalysed reaction is 5-amino-1-(5-phospho-beta-D-ribosyl)imidazole + S-adenosyl-L-methionine = 4-amino-2-methyl-5-(phosphooxymethyl)pyrimidine + CO + 5'-deoxyadenosine + formate + L-methionine + 3 H(+). Its pathway is cofactor biosynthesis; thiamine diphosphate biosynthesis. In terms of biological role, catalyzes the synthesis of the hydroxymethylpyrimidine phosphate (HMP-P) moiety of thiamine from aminoimidazole ribotide (AIR) in a radical S-adenosyl-L-methionine (SAM)-dependent reaction. The chain is Phosphomethylpyrimidine synthase from Pseudomonas putida (strain GB-1).